Consider the following 505-residue polypeptide: Prenylcysteine oxidase 1 (505 aa).

Residues 1–27 (MGRVVAELVSSLLGLWLLLCSCGCPEG) form the signal peptide. N-linked (GlcNAc...) asparagine glycans are attached at residues Asn196, Asn323, and Asn353.

Belongs to the prenylcysteine oxidase family. It depends on FAD as a cofactor. As to expression, widely expressed.

It is found in the lysosome. It catalyses the reaction an S-polyprenyl-L-cysteine + O2 + H2O = a polyprenal + L-cysteine + H2O2. The catalysed reaction is S-(2E,6E)-farnesyl-L-cysteine + O2 + H2O = (2E,6E)-farnesal + L-cysteine + H2O2. The enzyme catalyses [(2E,6E,10E)-geranylgeranyl]-L-cysteine + O2 + H2O = (2E,6E,10E)-geranylgeranial + L-cysteine + H2O2. Prenylcysteine oxidase that cleaves the thioether bond of prenyl-L-cysteines, such as farnesylcysteine and geranylgeranylcysteine. Only active against free prenylcysteines and not prenylcysteine residues within prenylated proteins or peptides. Involved in the final step in the degradation of prenylated proteins, by degrading prenylcysteines after the protein has been degraded. This chain is Prenylcysteine oxidase 1, found in Homo sapiens (Human).